The chain runs to 583 residues: Radixin (583 aa).

The FERM domain occupies 5 to 295 (INVRVTTMDA…GNHELYMRRR (291 aa)). 60 to 63 (KLNK) contributes to the a 1,2-diacyl-sn-glycero-3-phospho-(1D-myo-inositol) binding site. The residue at position 83 (lysine 83) is an N6-succinyllysine. Lysine 278 is an a 1,2-diacyl-sn-glycero-3-phospho-(1D-myo-inositol) binding site. Disordered stretches follow at residues 310 to 336 (REEK…AEKE), 374 to 407 (ELDQ…AKQA), and 458 to 526 (KTKE…RVNK). Positions 374–400 (ELDQERKRAKEEAERLEKERRAAEEAK) are enriched in basic and acidic residues. Positions 469–480 (APPPPPPPPVVP) are enriched in pro residues. Composition is skewed to basic and acidic residues over residues 483 to 492 (ENEHDEHDEN) and 506 to 525 (MNHR…ERVN). At threonine 564 the chain carries Phosphothreonine; by ROCK2.

Interacts with CPNE1 (via VWFA domain) and CPNE4 (via VWFA domain). Binds NHERF1. Interacts with NHERF1, NHERF2, LAYN, MME/NEP and ICAM2. Interacts (via FERM domain) with SPN/CD43 cytoplasmic tail. Interacts with CD44. Interacts with CLIC5; may work together in a complex which also includes EZR and MYO6 to stabilize linkages between the plasma membrane and subjacent actin cytoskeleton at the base of stereocilia. Phosphorylated by tyrosine-protein kinases. Phosphorylation by ROCK2 suppresses the head-to-tail association of the N-terminal and C-terminal halves resulting in an opened conformation which is capable of actin and membrane-binding.

The protein resides in the cell membrane. Its subcellular location is the cytoplasm. The protein localises to the cytoskeleton. It is found in the cleavage furrow. It localises to the cell projection. The protein resides in the microvillus. Its subcellular location is the stereocilium. Its activity is regulated as follows. A head-to-tail association, of the N-terminal and C-terminal halves results in a closed conformation (inactive form) which is incapable of actin or membrane-binding. Its function is as follows. Probably plays a crucial role in the binding of the barbed end of actin filaments to the plasma membrane. The chain is Radixin (RDX) from Sus scrofa (Pig).